Reading from the N-terminus, the 294-residue chain is Putative ribose uptake protein RbsU (294 aa).

10 helical membrane passes run 5–24 (ALLIGLGPLLGWGLYPTIAS), 34–56 (ILGSTIGTLIFALIYAWVQGIAF), 61–80 (NLWFSILSGIGWASAQIVTF), 90–112 (RAMPITTAFQLLGASLWGVFALG), 121–138 (VLGGLALVGIIIGAWLTV), 153–170 (QAVIWLAVGEIGYWAYSA), 182–204 (AFVPQAIGMVIVSIVYALFLASR), 214–236 (VSYTHIISGFFFAFAALTYLISA), 243–265 (LATGFILSQTSVVLATLTGIWFL), and 275–292 (WVTIGGLILIIAAAAVTV).

It belongs to the GRP transporter (TC 2.A.7.5) family.

The protein resides in the cell membrane. In terms of biological role, could be involved in the uptake of ribose. The sequence is that of Putative ribose uptake protein RbsU (rbsU) from Lactiplantibacillus plantarum (strain ATCC BAA-793 / NCIMB 8826 / WCFS1) (Lactobacillus plantarum).